The following is a 309-amino-acid chain: Homoserine O-acetyltransferase (309 aa).

Cys142 functions as the Acyl-thioester intermediate in the catalytic mechanism. Positions 163 and 192 each coordinate substrate. The active-site Proton acceptor is the His235. Glu237 is a catalytic residue. A substrate-binding site is contributed by Arg249.

This sequence belongs to the MetA family.

The protein resides in the cytoplasm. It catalyses the reaction L-homoserine + acetyl-CoA = O-acetyl-L-homoserine + CoA. Its pathway is amino-acid biosynthesis; L-methionine biosynthesis via de novo pathway; O-acetyl-L-homoserine from L-homoserine: step 1/1. Its function is as follows. Transfers an acetyl group from acetyl-CoA to L-homoserine, forming acetyl-L-homoserine. This chain is Homoserine O-acetyltransferase, found in Petrotoga mobilis (strain DSM 10674 / SJ95).